The sequence spans 693 residues: Tegument protein UL47 (693 aa).

Disordered stretches follow at residues 1–32 (MSAR…DGVG) and 48–126 (ELEA…GYLG). Residues 48–57 (ELEALEEMAG) show a composition bias toward acidic residues. Residues 50 to 75 (EALEEMAGDEPPVRRRREGPRARRRR) are RNA-binding. A Nuclear localization signal motif is present at residues 63–75 (RRRREGPRARRRR). Over residues 63–75 (RRRREGPRARRRR) the composition is skewed to basic residues. Residues 647–670 (SVLGPRVRVVDIMSQFRKLLMGDE) carry the Nuclear export signal motif.

The protein belongs to the alphaherpesvirinae HHV-1 UL47 family. As to quaternary structure, interacts with US3 kinase. Interacts with UL31 and UL34; these interactions seem important for efficient virion nuclear egress. Interacts with UL41/VHS. Phosphorylated by US3. This phosphorylation is required for proper nuclear localization.

It localises to the virion tegument. The protein localises to the host nucleus. Its subcellular location is the host cytoplasm. Its function is as follows. Tegument protein that can bind to various RNA transcripts. Plays a role in the attenuation of selective viral and cellular mRNA degradation by modulating the activity of host shutoff RNase UL41/VHS. Also plays a role in the primary envelopment of virions in the perinuclear space, probably by interacting with two nuclear egress proteins UL31 and UL34. The protein is Tegument protein UL47 of Homo sapiens (Human).